Consider the following 566-residue polypeptide: Urease subunit alpha (566 aa).

One can recognise a Urease domain in the interval 128–566 (GGVDTHIHFI…LPMAQRYFLF (439 aa)). Ni(2+)-binding residues include histidine 133, histidine 135, and lysine 216. An N6-carboxylysine modification is found at lysine 216. Position 218 (histidine 218) interacts with substrate. Ni(2+) is bound by residues histidine 245 and histidine 271. Histidine 319 acts as the Proton donor in catalysis. Aspartate 359 is a Ni(2+) binding site.

This sequence belongs to the metallo-dependent hydrolases superfamily. Urease alpha subunit family. In terms of assembly, may form a heterohexamer of 3 UreC (alpha) and 3 UreAB (gamma/beta) subunits. May also form a heterotrimer of UreA (gamma), UreB (beta) and UreC (alpha) subunits. Three heterotrimers associate to form the active enzyme. Requires Ni cation as cofactor. In terms of processing, carboxylation allows a single lysine to coordinate two nickel ions.

The protein resides in the cytoplasm. It carries out the reaction urea + 2 H2O + H(+) = hydrogencarbonate + 2 NH4(+). It functions in the pathway nitrogen metabolism; urea degradation; CO(2) and NH(3) from urea (urease route): step 1/1. The protein is Urease subunit alpha of Pseudomonas syringae pv. tomato (strain ATCC BAA-871 / DC3000).